The following is a 224-amino-acid chain: N-(5'-phosphoribosyl)anthranilate isomerase (224 aa).

Belongs to the TrpF family.

The enzyme catalyses N-(5-phospho-beta-D-ribosyl)anthranilate = 1-(2-carboxyphenylamino)-1-deoxy-D-ribulose 5-phosphate. It participates in amino-acid biosynthesis; L-tryptophan biosynthesis; L-tryptophan from chorismate: step 3/5. The protein is N-(5'-phosphoribosyl)anthranilate isomerase (TRP1) of Saccharomyces cerevisiae (strain ATCC 204508 / S288c) (Baker's yeast).